The following is a 207-amino-acid chain: Alpha-1-acid glycoprotein 1 (207 aa).

A signal peptide spans Met1 to Ala18. Position 19 is a pyrrolidone carboxylic acid (Gln19). N-linked (GlcNAc...) asparagine glycans are attached at residues Asn25, Asn34, Asn76, Asn94, and Asn104. A disulfide bond links Cys91 and Cys184.

This sequence belongs to the calycin superfamily. Lipocalin family.

Its subcellular location is the secreted. Its function is as follows. Functions as a transport protein in the blood stream. Binds various ligands in the interior of its beta-barrel domain. Appears to function in modulating the activity of the immune system during the acute-phase reaction. This is Alpha-1-acid glycoprotein 1 (Orm1) from Mus musculus (Mouse).